Consider the following 289-residue polypeptide: Xylosylprotein 4-beta-galactosyltransferase (289 aa).

Over 1–6 (MKLKTR) the chain is Cytoplasmic. The helical; Signal-anchor for type II membrane protein transmembrane segment at 7 to 27 (LILSGTILISLAACYFLVLLV) threads the bilayer. Topologically, residues 28–289 (LDLEITRDLM…DLNWTPYCKS (262 aa)) are lumenal. UDP-alpha-D-galactose is bound at residue 58 to 62 (PYRDR). Residues asparagine 81 and asparagine 90 are each glycosylated (N-linked (GlcNAc...) asparagine). Residues 97–99 (FNR), 123–124 (VD), tyrosine 154, and tryptophan 184 each bind UDP-alpha-D-galactose. Aspartate 124 is a binding site for Mn(2+). Residue 186-189 (LEDD) participates in N-acetyl-D-glucosamine binding. The N-linked (GlcNAc...) asparagine glycan is linked to asparagine 201. Positions 214 to 236 (NTFRHIHGPKRKRDYTPKKNDKN) are disordered. Over residues 217-226 (RHIHGPKRKR) the composition is skewed to basic residues. Histidine 218 serves as a coordination point for Mn(2+). 218-220 (HIH) contacts UDP-alpha-D-galactose. Residues 227 to 236 (DYTPKKNDKN) are compositionally biased toward basic and acidic residues.

Belongs to the glycosyltransferase 7 family. It depends on Mn(2+) as a cofactor.

The protein localises to the membrane. The enzyme catalyses 3-O-(beta-D-xylosyl)-L-seryl-[protein] + UDP-alpha-D-galactose = 3-O-(beta-D-galactosyl-(1-&gt;4)-beta-D-xylosyl)-L-seryl-[protein] + UDP + H(+). It functions in the pathway protein modification; protein glycosylation. Glycosyltransferase required for the biosynthesis of the tetrasaccharide (GlcA-Gal-Gal-Xyl-)Ser core linker of heparan sulfate and chondroitin sulfate. Required for embryonic development. Involved in vulval epithelium invagination. Required for axon regeneration after injury. This Caenorhabditis elegans protein is Xylosylprotein 4-beta-galactosyltransferase (sqv-3).